Reading from the N-terminus, the 257-residue chain is Phosphatidylglycerol--prolipoprotein diacylglyceryl transferase (257 aa).

Transmembrane regions (helical) follow at residues 13–33 (IGPIDVHWYGIFMAISIAIGG), 49–69 (FLLNLLMIVVISGVVGARLMF), 88–108 (IYEGGLSWHGAVLGGFLAGLY), 123–143 (FAVLGLSIGNILVRIGNIFNQ), 152–172 (FAFGRWPAQLVGVAMGIILLI), 185–202 (GYQFWSFIFYYQLMRGLI), and 223–243 (IGFFTLTQLVTPFILILAYWM). Position 136 (Arg136) interacts with a 1,2-diacyl-sn-glycero-3-phospho-(1'-sn-glycerol).

The protein belongs to the Lgt family.

Its subcellular location is the cell membrane. It carries out the reaction L-cysteinyl-[prolipoprotein] + a 1,2-diacyl-sn-glycero-3-phospho-(1'-sn-glycerol) = an S-1,2-diacyl-sn-glyceryl-L-cysteinyl-[prolipoprotein] + sn-glycerol 1-phosphate + H(+). The protein operates within protein modification; lipoprotein biosynthesis (diacylglyceryl transfer). In terms of biological role, catalyzes the transfer of the diacylglyceryl group from phosphatidylglycerol to the sulfhydryl group of the N-terminal cysteine of a prolipoprotein, the first step in the formation of mature lipoproteins. This is Phosphatidylglycerol--prolipoprotein diacylglyceryl transferase from Thermoanaerobacter pseudethanolicus (strain ATCC 33223 / 39E) (Clostridium thermohydrosulfuricum).